The following is a 254-amino-acid chain: Cytochrome c oxidase subunit 2 (254 aa).

Residues 12 to 38 (DAPEPWQICYQDSATKIMSGIDKLTGE) lie on the Mitochondrial intermembrane side of the membrane. Residues 39–59 (IFYYETLLLIIVGWVLISAII) form a helical membrane-spanning segment. The Mitochondrial matrix segment spans residues 60-73 (KYTKTELSYKYFNH). The chain crosses the membrane as a helical span at residues 74–94 (GTLIEILWTCSPAFILIAISF). At 95-248 (PSFKLLYLMD…KYLEWLNIHL (154 aa)) the chain is on the mitochondrial intermembrane side. 6 residues coordinate Cu cation: H182, C217, E219, C221, H225, and M228. Mg(2+) is bound at residue E219.

The protein belongs to the cytochrome c oxidase subunit 2 family. In terms of assembly, component of the cytochrome c oxidase (complex IV, CIV), a multisubunit enzyme composed of a catalytic core of 3 subunits and several supernumerary subunits. The complex exists as a monomer or a dimer and forms supercomplexes (SCs) in the inner mitochondrial membrane with ubiquinol-cytochrome c oxidoreductase (cytochrome b-c1 complex, complex III, CIII). It depends on Cu cation as a cofactor.

The protein localises to the mitochondrion inner membrane. It carries out the reaction 4 Fe(II)-[cytochrome c] + O2 + 8 H(+)(in) = 4 Fe(III)-[cytochrome c] + 2 H2O + 4 H(+)(out). Component of the cytochrome c oxidase, the last enzyme in the mitochondrial electron transport chain which drives oxidative phosphorylation. The respiratory chain contains 3 multisubunit complexes succinate dehydrogenase (complex II, CII), ubiquinol-cytochrome c oxidoreductase (cytochrome b-c1 complex, complex III, CIII) and cytochrome c oxidase (complex IV, CIV), that cooperate to transfer electrons derived from NADH and succinate to molecular oxygen, creating an electrochemical gradient over the inner membrane that drives transmembrane transport and the ATP synthase. Cytochrome c oxidase is the component of the respiratory chain that catalyzes the reduction of oxygen to water. Electrons originating from reduced cytochrome c in the intermembrane space (IMS) are transferred via the dinuclear copper A center (CU(A)) of subunit 2 and heme A of subunit 1 to the active site in subunit 1, a binuclear center (BNC) formed by heme A3 and copper B (CU(B)). The BNC reduces molecular oxygen to 2 water molecules using 4 electrons from cytochrome c in the IMS and 4 protons from the mitochondrial matrix. The sequence is that of Cytochrome c oxidase subunit 2 from Zancudomyces culisetae (Gut fungus).